A 299-amino-acid polypeptide reads, in one-letter code: HTH-type transcriptional regulator CysL (299 aa).

The HTH lysR-type domain maps to 1 to 58 (MYYDVLKTFIAVVEEKNFTKAAEKLMISQPSVSLHIKNLEKEFQTALLNRSPKHFTTT). The segment at residues 18 to 37 (FTKAAEKLMISQPSVSLHIK) is a DNA-binding region (H-T-H motif).

It belongs to the LysR transcriptional regulatory family.

Its function is as follows. Transcriptional activator of the cysJI operon which is involved in sulfur assimilation. Also negatively regulates its own transcription. This Bacillus subtilis (strain 168) protein is HTH-type transcriptional regulator CysL (cysL).